Consider the following 284-residue polypeptide: 4-hydroxybenzoate octaprenyltransferase (284 aa).

8 consecutive transmembrane segments (helical) span residues 16–36 (PIGI…ASDG), 40–60 (WTLL…GCAI), 91–111 (LLVA…LNTL), 132–152 (FFAI…PMGF), 157–177 (NTVP…AVAY), 206–226 (VAAV…VGWQ), 231–251 (TWFA…YTLI), and 259–279 (CFAA…GVVL).

The protein belongs to the UbiA prenyltransferase family. Mg(2+) is required as a cofactor.

The protein resides in the cell inner membrane. The enzyme catalyses all-trans-octaprenyl diphosphate + 4-hydroxybenzoate = 4-hydroxy-3-(all-trans-octaprenyl)benzoate + diphosphate. It participates in cofactor biosynthesis; ubiquinone biosynthesis. Catalyzes the prenylation of para-hydroxybenzoate (PHB) with an all-trans polyprenyl group. Mediates the second step in the final reaction sequence of ubiquinone-8 (UQ-8) biosynthesis, which is the condensation of the polyisoprenoid side chain with PHB, generating the first membrane-bound Q intermediate 3-octaprenyl-4-hydroxybenzoate. In Herminiimonas arsenicoxydans, this protein is 4-hydroxybenzoate octaprenyltransferase.